Consider the following 172-residue polypeptide: Protein GrpE (172 aa).

Belongs to the GrpE family. Homodimer.

It is found in the cytoplasm. Functionally, participates actively in the response to hyperosmotic and heat shock by preventing the aggregation of stress-denatured proteins, in association with DnaK and GrpE. It is the nucleotide exchange factor for DnaK and may function as a thermosensor. Unfolded proteins bind initially to DnaJ; upon interaction with the DnaJ-bound protein, DnaK hydrolyzes its bound ATP, resulting in the formation of a stable complex. GrpE releases ADP from DnaK; ATP binding to DnaK triggers the release of the substrate protein, thus completing the reaction cycle. Several rounds of ATP-dependent interactions between DnaJ, DnaK and GrpE are required for fully efficient folding. The chain is Protein GrpE from Thermotoga sp. (strain RQ2).